We begin with the raw amino-acid sequence, 754 residues long: Polyribonucleotide nucleotidyltransferase (754 aa).

The Mg(2+) site is built by D525 and D531. The KH domain occupies 591-650 (PRITTIKVPVDKIGEVIGPKGKMINSITEETGASISIEDDGTVFVGASNGEAAQAAIDKI). The 70-residue stretch at 662-731 (GERFLGTVVK…NRGKISLVLV (70 aa)) folds into the S1 motif domain.

It belongs to the polyribonucleotide nucleotidyltransferase family. It depends on Mg(2+) as a cofactor.

The protein resides in the cytoplasm. The enzyme catalyses RNA(n+1) + phosphate = RNA(n) + a ribonucleoside 5'-diphosphate. In terms of biological role, involved in mRNA degradation. Catalyzes the phosphorolysis of single-stranded polyribonucleotides processively in the 3'- to 5'-direction. In Mycolicibacterium vanbaalenii (strain DSM 7251 / JCM 13017 / BCRC 16820 / KCTC 9966 / NRRL B-24157 / PYR-1) (Mycobacterium vanbaalenii), this protein is Polyribonucleotide nucleotidyltransferase.